We begin with the raw amino-acid sequence, 235 residues long: Ribosomal RNA large subunit methyltransferase E (235 aa).

5 residues coordinate S-adenosyl-L-methionine: G76, W78, D99, D115, and D139. The Proton acceptor role is filled by K179.

The protein belongs to the class I-like SAM-binding methyltransferase superfamily. RNA methyltransferase RlmE family.

It is found in the cytoplasm. It catalyses the reaction uridine(2552) in 23S rRNA + S-adenosyl-L-methionine = 2'-O-methyluridine(2552) in 23S rRNA + S-adenosyl-L-homocysteine + H(+). Functionally, specifically methylates the uridine in position 2552 of 23S rRNA at the 2'-O position of the ribose in the fully assembled 50S ribosomal subunit. The protein is Ribosomal RNA large subunit methyltransferase E of Rhodopseudomonas palustris (strain BisB5).